Consider the following 261-residue polypeptide: tRNA pseudouridine synthase A (261 aa).

The Nucleophile role is filled by D51. Y109 is a binding site for substrate.

The protein belongs to the tRNA pseudouridine synthase TruA family. In terms of assembly, homodimer.

The catalysed reaction is uridine(38/39/40) in tRNA = pseudouridine(38/39/40) in tRNA. Its function is as follows. Formation of pseudouridine at positions 38, 39 and 40 in the anticodon stem and loop of transfer RNAs. In Shewanella sp. (strain MR-4), this protein is tRNA pseudouridine synthase A.